Here is a 567-residue protein sequence, read N- to C-terminus: Low-affinity glucose transporter (567 aa).

The segment covering 1–24 has biased composition (polar residues); it reads MSNQMTDSTSAGSGTEHSVDTNTA. A disordered region spans residues 1–36; that stretch reads MSNQMTDSTSAGSGTEHSVDTNTALKAGSPNDLKVS. Residues 18-62 are Cytoplasmic-facing; sequence SVDTNTALKAGSPNDLKVSHEEDLNDLEKTAEETLQQKPAKEYIF. The helical transmembrane segment at 63–83 threads the bilayer; that stretch reads VSLCCVMVAFGGFVFGWDTGT. Topologically, residues 84-113 are extracellular; it reads ISGFVNQTDFLRRFGQEKADGSHYLSNVRT. A glycan (N-linked (GlcNAc...) asparagine) is linked at asparagine 89. Residues 114–134 form a helical membrane-spanning segment; the sequence is GLIVSIFNIGCAVGGIVLSNI. Topologically, residues 135-141 are cytoplasmic; sequence GDRWGRR. A helical transmembrane segment spans residues 142–162; sequence IGLITVIIIYVIGIIIQIASV. Over 163 to 167 the chain is Extracellular; it reads DKWYQ. A helical transmembrane segment spans residues 168–188; the sequence is YFIGRIISGLGVGGITVLSPM. Residues 189 to 199 lie on the Cytoplasmic side of the membrane; that stretch reads LISETAPKHLR. A helical membrane pass occupies residues 200-220; it reads GTLVSCYQLMITFGIFLGYCT. The Extracellular segment spans residues 221–234; that stretch reads NYGTKNYSNSVQWR. The chain crosses the membrane as a helical span at residues 235-255; sequence VPLGLCFAWAIFMVLGMMFVP. The Cytoplasmic portion of the chain corresponds to 256–334; sequence ESARFLVETD…MGIMIQSLQQ (79 aa). Residues 335–354 form a helical membrane-spanning segment; that stretch reads LTGDNYFFYYGTTIFQSVGM. The Extracellular portion of the chain corresponds to 355 to 358; that stretch reads DDSF. The helical transmembrane segment at 359 to 379 threads the bilayer; that stretch reads ETSIVLGIVNFASTFFALYTV. Residues 380-386 lie on the Cytoplasmic side of the membrane; it reads DHFGRRN. The helical transmembrane segment at 387 to 407 threads the bilayer; that stretch reads CLLYGCVGMVACYVVYASVGV. Topologically, residues 408-429 are extracellular; it reads TRLWPDGPDHPDISSKGAGNCM. Residues 430-450 traverse the membrane as a helical segment; that stretch reads IVFACFYIFCFATTWAPIAYV. Topologically, residues 451-466 are cytoplasmic; sequence VISESYPLRVKGKAMA. The helical transmembrane segment at 467–487 threads the bilayer; it reads IASASNWIWGFLIGFFTPFIT. The Extracellular segment spans residues 488–493; that stretch reads SAIHFY. The helical transmembrane segment at 494-514 threads the bilayer; sequence YGYVFMGCMVFAFFYVYFFVP. Residues 515-567 are Cytoplasmic-facing; it reads ETKGLTLEEVNEMYSEGVLPWKSSSWVPSSRRGAEYDVDALQHDDKPWYKAML.

The protein belongs to the major facilitator superfamily. Sugar transporter (TC 2.A.1.1) family.

The protein localises to the membrane. Low-affinity glucose transporter. In Kluyveromyces lactis (strain ATCC 8585 / CBS 2359 / DSM 70799 / NBRC 1267 / NRRL Y-1140 / WM37) (Yeast), this protein is Low-affinity glucose transporter (RAG1).